Consider the following 379-residue polypeptide: 4-hydroxy-3-methylbut-2-enyl diphosphate reductase (379 aa).

Cys-39 is a [4Fe-4S] cluster binding site. His-69 lines the (2E)-4-hydroxy-3-methylbut-2-enyl diphosphate pocket. His-69 provides a ligand contact to dimethylallyl diphosphate. His-69 serves as a coordination point for isopentenyl diphosphate. Residue Cys-130 coordinates [4Fe-4S] cluster. His-158 lines the (2E)-4-hydroxy-3-methylbut-2-enyl diphosphate pocket. His-158 is a dimethylallyl diphosphate binding site. His-158 contacts isopentenyl diphosphate. The active-site Proton donor is Glu-160. Thr-223 is a (2E)-4-hydroxy-3-methylbut-2-enyl diphosphate binding site. A [4Fe-4S] cluster-binding site is contributed by Cys-261. Ser-290, Ser-291, Asn-292, and Ser-352 together coordinate (2E)-4-hydroxy-3-methylbut-2-enyl diphosphate. Positions 290, 291, 292, and 352 each coordinate dimethylallyl diphosphate. The isopentenyl diphosphate site is built by Ser-290, Ser-291, Asn-292, and Ser-352.

It belongs to the IspH family. [4Fe-4S] cluster serves as cofactor.

It catalyses the reaction isopentenyl diphosphate + 2 oxidized [2Fe-2S]-[ferredoxin] + H2O = (2E)-4-hydroxy-3-methylbut-2-enyl diphosphate + 2 reduced [2Fe-2S]-[ferredoxin] + 2 H(+). It carries out the reaction dimethylallyl diphosphate + 2 oxidized [2Fe-2S]-[ferredoxin] + H2O = (2E)-4-hydroxy-3-methylbut-2-enyl diphosphate + 2 reduced [2Fe-2S]-[ferredoxin] + 2 H(+). Its pathway is isoprenoid biosynthesis; dimethylallyl diphosphate biosynthesis; dimethylallyl diphosphate from (2E)-4-hydroxy-3-methylbutenyl diphosphate: step 1/1. It participates in isoprenoid biosynthesis; isopentenyl diphosphate biosynthesis via DXP pathway; isopentenyl diphosphate from 1-deoxy-D-xylulose 5-phosphate: step 6/6. Catalyzes the conversion of 1-hydroxy-2-methyl-2-(E)-butenyl 4-diphosphate (HMBPP) into a mixture of isopentenyl diphosphate (IPP) and dimethylallyl diphosphate (DMAPP). Acts in the terminal step of the DOXP/MEP pathway for isoprenoid precursor biosynthesis. This is 4-hydroxy-3-methylbut-2-enyl diphosphate reductase from Synechocystis sp. (strain ATCC 27184 / PCC 6803 / Kazusa).